A 230-amino-acid polypeptide reads, in one-letter code: Large ribosomal subunit protein uL1 (230 aa).

The protein belongs to the universal ribosomal protein uL1 family. In terms of assembly, part of the 50S ribosomal subunit.

In terms of biological role, binds directly to 23S rRNA. The L1 stalk is quite mobile in the ribosome, and is involved in E site tRNA release. Its function is as follows. Protein L1 is also a translational repressor protein, it controls the translation of the L11 operon by binding to its mRNA. The protein is Large ribosomal subunit protein uL1 of Acidithiobacillus ferrooxidans (strain ATCC 53993 / BNL-5-31) (Leptospirillum ferrooxidans (ATCC 53993)).